The chain runs to 880 residues: Potassium transport protein 2 (880 aa).

An N-linked (GlcNAc...) asparagine glycan is attached at Asn9. Transmembrane regions (helical) follow at residues 28-48 (FVQDSFIIGMTILCSVILYGS) and 84-104 (TILLFGVLSTPITVNLGLTLF). Positions 157–182 (MHRPVAPETKAEEAEHQENEKHHRHH) are disordered. The segment covering 165 to 177 (TKAEEAEHQENEK) has biased composition (basic and acidic residues). 7 N-linked (GlcNAc...) asparagine glycosylation sites follow: Asn239, Asn283, Asn293, Asn294, Asn321, Asn443, and Asn460. The segment covering 289–315 (HHLDNNSSISSHNPSLETANDGNQETV) has biased composition (polar residues). The segment at 289 to 344 (HHLDNNSSISSHNPSLETANDGNQETVSSSNSNYSTTRVDNDPHVASYSPQNSNFD) is disordered. The segment covering 316 to 325 (SSSNSNYSTT) has biased composition (low complexity). Helical transmembrane passes span 494 to 514 (ILVVYFLFWHILGLVAFLIFI), 571 to 591 (LIFLGNTFFPIMLRFIIWIMI), 625 to 645 (WVLFLNLTLLNFASFFFFMVL), 684 to 704 (IAPAVMVTYMFMMYISAYPIA), 756 to 776 (QLSHDLWYLFLGYFIITIVEG), and 787 to 807 (FTLFAILFEVISGYGTVGLSL). The segment at 857–880 (REEEDYMRRHGKKNTNRADPVPSS) is disordered.

The protein belongs to the TrkH potassium transport family.

It is found in the cell membrane. Together with TRK1, defines the major, high-affinity potassium influx transport system. Involved in maintenance of the proper sodium/potassium ratio in the cell and in regulating the plasma membrane potential. This Schizosaccharomyces pombe (strain 972 / ATCC 24843) (Fission yeast) protein is Potassium transport protein 2 (trk2).